The chain runs to 116 residues: Large ribosomal subunit protein uL18 (116 aa).

It belongs to the universal ribosomal protein uL18 family. In terms of assembly, part of the 50S ribosomal subunit; part of the 5S rRNA/L5/L18/L25 subcomplex. Contacts the 5S and 23S rRNAs.

Functionally, this is one of the proteins that bind and probably mediate the attachment of the 5S RNA into the large ribosomal subunit, where it forms part of the central protuberance. This is Large ribosomal subunit protein uL18 from Shewanella sp. (strain ANA-3).